We begin with the raw amino-acid sequence, 126 residues long: Ribosome-binding factor A (126 aa).

This sequence belongs to the RbfA family. In terms of assembly, monomer. Binds 30S ribosomal subunits, but not 50S ribosomal subunits or 70S ribosomes.

The protein localises to the cytoplasm. Functionally, one of several proteins that assist in the late maturation steps of the functional core of the 30S ribosomal subunit. Associates with free 30S ribosomal subunits (but not with 30S subunits that are part of 70S ribosomes or polysomes). Required for efficient processing of 16S rRNA. May interact with the 5'-terminal helix region of 16S rRNA. This Histophilus somni (strain 129Pt) (Haemophilus somnus) protein is Ribosome-binding factor A.